An 80-amino-acid chain; its full sequence is MSMTILPLELIDKCIGSNLWVIMKSEREFAGTLVGFDDYVNIVLKDVTEYDTVTGVTEKHSEMLLNGNGMCMLIPGGKPE.

The 74-residue stretch at 6–79 folds into the Sm domain; sequence LPLELIDKCI…MCMLIPGGKP (74 aa).

This sequence belongs to the snRNP Sm proteins family. In terms of assembly, component of the heptameric LSM1-LSM7 complex that forms a seven-membered ring structure with a donut shape. The LSm subunits are arranged in the order lsm1, lsm2, lsm3, lsm6, lsm5, lsm7 and lsm4. Component of the heptameric LSM2-LSM8 complex that forms a seven-membered ring structure with a donut shape. The LSm subunits are arranged in the order lsm8, lsm2, lsm3, lsm6, lsm5, lsm7 and lsm4.

It localises to the nucleus. Component of LSm protein complexes, which are involved in RNA processing and may function in a chaperone-like manner. Component of the cytoplasmic LSM1-LSM7 complex which is involved in mRNA degradation by activating the decapping step. The LSM1-LSM7 complex loads onto the 3'-end of single stranded RNA. Component of the nuclear LSM2-LSM8 complex, which is involved in spliceosome assembly. The LSM2-LSM8 complex plays a role in the biogenesis of the spliceosomal U4/U6-U5 tri-snRNP complex by accelerating prp24-mediated annealing of U4/U6 di-snRNA. The LSM2-LSM8 complex binds U6 snRNA terminating with a cyclic 2',3' phosphate group; RNA with an unmodified 3' hydroxyl or non-cyclic 3' phosphate is bound less tightly. The sequence is that of LSM complex subunit lsm5 (lsm5) from Schizosaccharomyces pombe (strain 972 / ATCC 24843) (Fission yeast).